We begin with the raw amino-acid sequence, 92 residues long: Small ribosomal subunit protein uS19 (92 aa).

Belongs to the universal ribosomal protein uS19 family.

Its function is as follows. Protein S19 forms a complex with S13 that binds strongly to the 16S ribosomal RNA. The sequence is that of Small ribosomal subunit protein uS19 from Malacoplasma penetrans (strain HF-2) (Mycoplasma penetrans).